The sequence spans 447 residues: N-succinylarginine dihydrolase (447 aa).

Residues 19–28 (AGLSFGNEAS), N110, and 137–138 (HR) each bind substrate. The active site involves E174. Substrate is bound at residue R212. H248 is an active-site residue. Substrate contacts are provided by D250 and N359. The Nucleophile role is filled by C365.

It belongs to the succinylarginine dihydrolase family. As to quaternary structure, homodimer.

The enzyme catalyses N(2)-succinyl-L-arginine + 2 H2O + 2 H(+) = N(2)-succinyl-L-ornithine + 2 NH4(+) + CO2. It functions in the pathway amino-acid degradation; L-arginine degradation via AST pathway; L-glutamate and succinate from L-arginine: step 2/5. Functionally, catalyzes the hydrolysis of N(2)-succinylarginine into N(2)-succinylornithine, ammonia and CO(2). The protein is N-succinylarginine dihydrolase of Escherichia coli O1:K1 / APEC.